A 52-amino-acid chain; its full sequence is Large ribosomal subunit protein bL32c (52 aa).

It belongs to the bacterial ribosomal protein bL32 family.

The protein localises to the plastid. The protein resides in the chloroplast. The protein is Large ribosomal subunit protein bL32c of Eucalyptus globulus subsp. globulus (Tasmanian blue gum).